Reading from the N-terminus, the 84-residue chain is Xenoxin-1 (84 aa).

A signal peptide spans M1–A18. Cystine bridges form between C21–C42, C35–C55, C61–C76, and C77–C82.

In terms of tissue distribution, expressed by the skin dorsal glands.

It localises to the secreted. Its function is as follows. Lacks alpha-neurotoxic activity, has apparently no antibacterial activity, nor anti-coagulant potency. The chain is Xenoxin-1 (xenoxin-1) from Xenopus laevis (African clawed frog).